The primary structure comprises 78 residues: Acyl carrier protein (78 aa).

The Carrier domain occupies 2–77; that stretch reads SDIAERVKKI…DAIKFLEKNA (76 aa). S37 is modified (O-(pantetheine 4'-phosphoryl)serine).

Belongs to the acyl carrier protein (ACP) family. In terms of processing, 4'-phosphopantetheine is transferred from CoA to a specific serine of apo-ACP by AcpS. This modification is essential for activity because fatty acids are bound in thioester linkage to the sulfhydryl of the prosthetic group.

It localises to the cytoplasm. The protein operates within lipid metabolism; fatty acid biosynthesis. Functionally, carrier of the growing fatty acid chain in fatty acid biosynthesis. This chain is Acyl carrier protein, found in Xanthobacter autotrophicus (strain ATCC BAA-1158 / Py2).